Reading from the N-terminus, the 36-residue chain is Lambda-hexatoxin-Hv1b (36 aa).

4 disulfides stabilise this stretch: cysteine 3-cysteine 17, cysteine 10-cysteine 22, cysteine 13-cysteine 14, and cysteine 16-cysteine 33.

It belongs to the neurotoxin 11 (kappa toxin) family. In terms of tissue distribution, expressed by the venom gland.

It localises to the secreted. Functionally, this excitatory toxin inhibits insect calcium-activated potassium (KCa) channels (Slo-type). In Hadronyche versuta (Blue mountains funnel-web spider), this protein is Lambda-hexatoxin-Hv1b.